The following is a 359-amino-acid chain: MVVLGSTGSIGTNSLEIARKFNIEVEALACAENVKKLNAQIAEFHPKFVYIKDEKLKSKVAHNKIFSGENGICEMLNRCESKTVINALVGFAGLIPSLKIQNSGKILCLSNKESLVVGGKFLDTSKIRAIDSEHFGLKFLLENSAKPAKMIITASGGAFYKTPIKDLSSKKAADALKHPNWNMGAKITIDSATMANKLFEMLEAFWLYGCKNLDALIEPSSSVHALIEFIDGSTAAHLSRTDMKLAIAHAILPNLKSEILKPVDLLSLNLKFEKIDIKKYPIFELKDEVLSNPDLGVIINAANEIAVFAFLQGKCGFLDISSTIFKAVEKFNDLTPENAEDLIKIDKIVRNFARSELRL.

NADPH-binding residues include Thr7, Gly8, Ser9, Ile10, Ala31, Asn33, and Asn111. A 1-deoxy-D-xylulose 5-phosphate-binding site is contributed by Lys112. Glu113 is an NADPH binding site. Asp131 contacts Mn(2+). 1-deoxy-D-xylulose 5-phosphate is bound by residues Ser132, Glu133, Ser155, and His178. Glu133 serves as a coordination point for Mn(2+). Gly184 lines the NADPH pocket. Residues Ser191, Asn196, Lys197, and Glu200 each coordinate 1-deoxy-D-xylulose 5-phosphate. Glu200 lines the Mn(2+) pocket.

This sequence belongs to the DXR family. The cofactor is Mg(2+). It depends on Mn(2+) as a cofactor.

It carries out the reaction 2-C-methyl-D-erythritol 4-phosphate + NADP(+) = 1-deoxy-D-xylulose 5-phosphate + NADPH + H(+). It participates in isoprenoid biosynthesis; isopentenyl diphosphate biosynthesis via DXP pathway; isopentenyl diphosphate from 1-deoxy-D-xylulose 5-phosphate: step 1/6. In terms of biological role, catalyzes the NADPH-dependent rearrangement and reduction of 1-deoxy-D-xylulose-5-phosphate (DXP) to 2-C-methyl-D-erythritol 4-phosphate (MEP). This is 1-deoxy-D-xylulose 5-phosphate reductoisomerase from Campylobacter hominis (strain ATCC BAA-381 / DSM 21671 / CCUG 45161 / LMG 19568 / NCTC 13146 / CH001A).